Consider the following 437-residue polypeptide: UDP-N-acetylmuramate--L-alanine ligase (437 aa).

ATP is bound at residue 108–114 (GAHGKTS).

The protein belongs to the MurCDEF family.

It is found in the cytoplasm. The catalysed reaction is UDP-N-acetyl-alpha-D-muramate + L-alanine + ATP = UDP-N-acetyl-alpha-D-muramoyl-L-alanine + ADP + phosphate + H(+). The protein operates within cell wall biogenesis; peptidoglycan biosynthesis. Functionally, cell wall formation. This chain is UDP-N-acetylmuramate--L-alanine ligase, found in Staphylococcus aureus (strain MRSA252).